The following is a 414-amino-acid chain: Glutamyl-tRNA reductase (414 aa).

Residues 51–54 (TCNR), S107, 112–114 (EYE), and Q118 each bind substrate. Residue C52 is the Nucleophile of the active site. 187–192 (GAGEIG) is a binding site for NADP(+).

This sequence belongs to the glutamyl-tRNA reductase family. Homodimer.

The catalysed reaction is (S)-4-amino-5-oxopentanoate + tRNA(Glu) + NADP(+) = L-glutamyl-tRNA(Glu) + NADPH + H(+). It participates in porphyrin-containing compound metabolism; protoporphyrin-IX biosynthesis; 5-aminolevulinate from L-glutamyl-tRNA(Glu): step 1/2. Catalyzes the NADPH-dependent reduction of glutamyl-tRNA(Glu) to glutamate 1-semialdehyde (GSA). The chain is Glutamyl-tRNA reductase from Sulfolobus acidocaldarius (strain ATCC 33909 / DSM 639 / JCM 8929 / NBRC 15157 / NCIMB 11770).